The primary structure comprises 387 residues: tRNA pseudouridine synthase B (387 aa).

The active-site Nucleophile is D43.

Belongs to the pseudouridine synthase TruB family. Type 1 subfamily.

It carries out the reaction uridine(55) in tRNA = pseudouridine(55) in tRNA. Responsible for synthesis of pseudouridine from uracil-55 in the psi GC loop of transfer RNAs. The sequence is that of tRNA pseudouridine synthase B from Bifidobacterium longum (strain DJO10A).